The primary structure comprises 227 residues: MGQKVHPIGFRLGVTKDWKSKWFADKKKYGQLLHEDVKIRKFVEERYKQAGIADVIIERLGEKVRIKILASKPGIVIGRKGAEVEELNKVLQAVTNAKDVTVNVDEVKKPELNAKLVAEDIALQLERRVSHRRAMKRAIDNAMKAGAKGIKVQVGGRIGGVDLARKEWFMAGRMPLQTIRADIDYGTARASTKYGILGVKVWIYKGDKLAEQKEEVLKKIEEELHTV.

In terms of domain architecture, KH type-2 spans 39-108 (IRKFVEERYK…DVTVNVDEVK (70 aa)).

It belongs to the universal ribosomal protein uS3 family. As to quaternary structure, part of the 30S ribosomal subunit. Forms a tight complex with proteins S10 and S14.

Its function is as follows. Binds the lower part of the 30S subunit head. Binds mRNA in the 70S ribosome, positioning it for translation. This is Small ribosomal subunit protein uS3 from Persephonella marina (strain DSM 14350 / EX-H1).